Consider the following 141-residue polypeptide: Hemoglobin subunit alpha-A (141 aa).

Residues 1-141 (VLSAADKTNV…VGTVLTAKYR (141 aa)) form the Globin domain. His58 contributes to the O2 binding site. His87 is a binding site for heme b.

It belongs to the globin family. In terms of assembly, heterotetramer of two alpha chains and two beta chains. In terms of tissue distribution, red blood cells.

Functionally, involved in oxygen transport from the lung to the various peripheral tissues. The chain is Hemoglobin subunit alpha-A (HBAA) from Branta canadensis (Canada goose).